The chain runs to 504 residues: Maturase K (504 aa).

The protein belongs to the intron maturase 2 family. MatK subfamily.

The protein localises to the plastid. The protein resides in the chloroplast. Functionally, usually encoded in the trnK tRNA gene intron. Probably assists in splicing its own and other chloroplast group II introns. The protein is Maturase K of Fagus japonica (Japanese beech).